Reading from the N-terminus, the 335-residue chain is Transaldolase (335 aa).

Residue lysine 135 is the Schiff-base intermediate with substrate of the active site.

This sequence belongs to the transaldolase family. Type 1 subfamily. Homodimer.

Its subcellular location is the cytoplasm. It catalyses the reaction D-sedoheptulose 7-phosphate + D-glyceraldehyde 3-phosphate = D-erythrose 4-phosphate + beta-D-fructose 6-phosphate. Its pathway is carbohydrate degradation; pentose phosphate pathway; D-glyceraldehyde 3-phosphate and beta-D-fructose 6-phosphate from D-ribose 5-phosphate and D-xylulose 5-phosphate (non-oxidative stage): step 2/3. Its function is as follows. Transaldolase is important for the balance of metabolites in the pentose-phosphate pathway. The protein is Transaldolase of Prochlorococcus marinus (strain SARG / CCMP1375 / SS120).